Consider the following 240-residue polypeptide: Protein YIPF6 (240 aa).

The Cytoplasmic portion of the chain corresponds to 1–91; that stretch reads MVVSHLNRTV…PKKSSALLRD (91 aa). A helical transmembrane segment spans residues 92–112; it reads WDLWGPLLLCVTLALMLQGGS. Residues 113–125 lie on the Lumenal side of the membrane; sequence ADSEEDGRPQFAE. A helical membrane pass occupies residues 126-146; the sequence is VFVIIWFGSVIITLNSKLLGG. At 147 to 149 the chain is on the cytoplasmic side; that stretch reads TIS. Residues 150-170 form a helical membrane-spanning segment; sequence FFQSLCVLGYCILPLTVAMIV. Residues 171-172 lie on the Lumenal side of the membrane; that stretch reads CR. A helical membrane pass occupies residues 173–193; that stretch reads IVLLGGSGVVSFAVRLIVVTA. At 194 to 215 the chain is on the cytoplasmic side; that stretch reads SFSWSTFASTAFLADSQPTNRK. Residues 216–236 traverse the membrane as a helical segment; that stretch reads ALVVYPVFLFYFVIGWMILTF. Residues 237-240 are Lumenal-facing; that stretch reads SPSH.

This sequence belongs to the YIP1 family.

It is found in the golgi apparatus membrane. The sequence is that of Protein YIPF6 (yipf6) from Danio rerio (Zebrafish).